Consider the following 119-residue polypeptide: Phosphoribosyl-AMP cyclohydrolase (119 aa).

Asp77 serves as a coordination point for Mg(2+). Cys78 lines the Zn(2+) pocket. Mg(2+) contacts are provided by Asp79 and Asp81. Zn(2+)-binding residues include Cys94 and Cys101.

This sequence belongs to the PRA-CH family. In terms of assembly, homodimer. Mg(2+) serves as cofactor. Requires Zn(2+) as cofactor.

The protein localises to the cytoplasm. It carries out the reaction 1-(5-phospho-beta-D-ribosyl)-5'-AMP + H2O = 1-(5-phospho-beta-D-ribosyl)-5-[(5-phospho-beta-D-ribosylamino)methylideneamino]imidazole-4-carboxamide. It functions in the pathway amino-acid biosynthesis; L-histidine biosynthesis; L-histidine from 5-phospho-alpha-D-ribose 1-diphosphate: step 3/9. Its function is as follows. Catalyzes the hydrolysis of the adenine ring of phosphoribosyl-AMP. The polypeptide is Phosphoribosyl-AMP cyclohydrolase (Ruegeria pomeroyi (strain ATCC 700808 / DSM 15171 / DSS-3) (Silicibacter pomeroyi)).